The primary structure comprises 658 residues: Pentatricopeptide repeat-containing protein 7, mitochondrial (658 aa).

The N-terminal 29 residues, 1–29, are a transit peptide targeting the mitochondrion; the sequence is MRNCVSPLLFAWTKHLRLREFKIPFPNRL. PPR repeat units lie at residues 130–164 and 220–254; these read VKKR…TPIW and LYVE…SESL.

Its subcellular location is the mitochondrion. In terms of biological role, mitochondrial RNA-binding protein required for the stability of the atp6 mRNA. The protein is Pentatricopeptide repeat-containing protein 7, mitochondrial (ppr7) of Schizosaccharomyces pombe (strain 972 / ATCC 24843) (Fission yeast).